The primary structure comprises 313 residues: L-lactate dehydrogenase (313 aa).

Residues Val-11, Asp-32, Arg-37, Tyr-62, and 76-77 (GV) contribute to the NAD(+) site. Substrate is bound by residues Gln-79, Arg-85, and 117–120 (NPVD). NAD(+)-binding positions include 115–117 (ASN) and Ser-143. Residue 148 to 151 (DTAR) coordinates substrate. Residues Arg-153 and His-168 each contribute to the beta-D-fructose 1,6-bisphosphate site. The Proton acceptor role is filled by His-175. Tyr-221 carries the post-translational modification Phosphotyrosine. A substrate-binding site is contributed by Thr-230.

This sequence belongs to the LDH/MDH superfamily. LDH family. Homotetramer.

It localises to the cytoplasm. The enzyme catalyses (S)-lactate + NAD(+) = pyruvate + NADH + H(+). It participates in fermentation; pyruvate fermentation to lactate; (S)-lactate from pyruvate: step 1/1. With respect to regulation, allosterically activated by fructose 1,6-bisphosphate (FBP). Its function is as follows. Catalyzes the conversion of lactate to pyruvate. The polypeptide is L-lactate dehydrogenase (Geotalea daltonii (strain DSM 22248 / JCM 15807 / FRC-32) (Geobacter daltonii)).